A 466-amino-acid polypeptide reads, in one-letter code: Chromosomal replication initiator protein DnaA (466 aa).

Residues 1-86 (MSLSLWQQCL…EVGTKPVTQT (86 aa)) are domain I, interacts with DnaA modulators. Residues 86 to 129 (TLKTPVHNVVAPAQTTTAQPQRVAPAARSGWDNVPAPAEPTYRS) form a domain II region. Residues 130–346 (NVNVKHTFDN…GALNRVIANA (217 aa)) form a domain III, AAA+ region region. Residues Gly174, Gly176, Lys177, and Thr178 each contribute to the ATP site. The tract at residues 347 to 466 (NFTGRAITID…FSNLIRTLSS (120 aa)) is domain IV, binds dsDNA.

This sequence belongs to the DnaA family. As to quaternary structure, oligomerizes as a right-handed, spiral filament on DNA at oriC.

Its subcellular location is the cytoplasm. In terms of biological role, plays an essential role in the initiation and regulation of chromosomal replication. ATP-DnaA binds to the origin of replication (oriC) to initiate formation of the DNA replication initiation complex once per cell cycle. Binds the DnaA box (a 9 base pair repeat at the origin) and separates the double-stranded (ds)DNA. Forms a right-handed helical filament on oriC DNA; dsDNA binds to the exterior of the filament while single-stranded (ss)DNA is stabiized in the filament's interior. The ATP-DnaA-oriC complex binds and stabilizes one strand of the AT-rich DNA unwinding element (DUE), permitting loading of DNA polymerase. After initiation quickly degrades to an ADP-DnaA complex that is not apt for DNA replication. Binds acidic phospholipids. This is Chromosomal replication initiator protein DnaA from Salmonella agona (strain SL483).